The chain runs to 157 residues: Probable succinate transporter subunit YjjB (157 aa).

4 consecutive transmembrane segments (helical) span residues 6–26, 51–71, 87–107, and 129–149; these read IILT…GFAM, VLMI…ILVG, VFTV…VAMI, and FLKA…PGLW.

It belongs to the ThrE exporter (TC 2.A.79) family. In terms of assembly, the transporter is composed of YjjB and YjjP.

Its subcellular location is the cell inner membrane. In terms of biological role, involved in succinate export with YjjP. Both proteins are required for export. The sequence is that of Probable succinate transporter subunit YjjB from Proteus mirabilis (strain HI4320).